The sequence spans 1027 residues: Abnormal embryogenesis protein 30 (1027 aa).

2 WD repeats span residues arginine 18 to valine 65 and lysine 70 to serine 109. 2 disordered regions span residues asparagine 619–leucine 655 and alanine 1005–isoleucine 1027. 2 stretches are compositionally biased toward acidic residues: residues leucine 625–glycine 647 and aspartate 1014–isoleucine 1027.

This sequence belongs to the APC4 family. As to quaternary structure, the APC/C is probably composed of at least 12 subunits: apc-2, apc-10, apc-11, cdc-26, emb-1, emb-27, emb-30, mat-1, mat-2, mat-3, such-1 and gfi-3.

It participates in protein modification; protein ubiquitination. Probable component of the anaphase promoting complex/cyclosome (APC/C), a cell cycle-regulated E3 ubiquitin ligase that controls progression through mitosis and the G1 phase of the cell cycle. The APC/C complex acts by mediating ubiquitination and subsequent degradation of target proteins. Developmental role in early embryogenesis and the metaphase to anaphase transition in oocyte and spermatocyte meiosis and mitosis in somatic and germ cells. Required for embryonic anterior-posterior axis formation. Negatively regulates ify-1 protein levels during meiosis I. Plays a role in regulating the abundance of glr-1 receptors in postmitotic neurons, which may in turn control animal locomotion. Involved in regulating GABA neurotransmitter release at neuromuscular junctions in GABA motor neurons. The sequence is that of Abnormal embryogenesis protein 30 from Caenorhabditis elegans.